A 380-amino-acid chain; its full sequence is O-phospho-L-seryl-tRNA:Cys-tRNA synthase (380 aa).

Pyridoxal 5'-phosphate contacts are provided by residues 86 to 87 (AR), Asn192, and 215 to 217 (SGH). The residue at position 218 (Lys218) is an N6-(pyridoxal phosphate)lysine.

Belongs to the SepCysS family. In terms of assembly, homodimer. Interacts with SepRS. Pyridoxal 5'-phosphate is required as a cofactor.

The catalysed reaction is O-phospho-L-seryl-tRNA(Cys) + hydrogen sulfide + H(+) = L-cysteinyl-tRNA(Cys) + phosphate. Its function is as follows. Converts O-phospho-L-seryl-tRNA(Cys) (Sep-tRNA(Cys)) to L-cysteinyl-tRNA(Cys) (Cys-tRNA(Cys)). This chain is O-phospho-L-seryl-tRNA:Cys-tRNA synthase, found in Methanococcus maripaludis (strain C6 / ATCC BAA-1332).